The following is a 226-amino-acid chain: Glyceraldehyde 3-phosphate phosphatase (226 aa).

This sequence belongs to the HAD-like hydrolase superfamily. The cofactor is Mg(2+).

In terms of biological role, catalyzes the dephosphorylation of D,L-glyceraldehyde 3-phosphate in vitro. The chain is Glyceraldehyde 3-phosphate phosphatase from Methanothermobacter thermautotrophicus (strain ATCC 29096 / DSM 1053 / JCM 10044 / NBRC 100330 / Delta H) (Methanobacterium thermoautotrophicum).